Here is a 547-residue protein sequence, read N- to C-terminus: Chaperonin GroEL (547 aa).

Residues 30–33 (TLGP), Lys-51, 87–91 (DGTTT), Gly-415, 479–481 (NAA), and Asp-495 contribute to the ATP site.

This sequence belongs to the chaperonin (HSP60) family. As to quaternary structure, forms a cylinder of 14 subunits composed of two heptameric rings stacked back-to-back. Interacts with the co-chaperonin GroES.

It is found in the cytoplasm. The enzyme catalyses ATP + H2O + a folded polypeptide = ADP + phosphate + an unfolded polypeptide.. Functionally, together with its co-chaperonin GroES, plays an essential role in assisting protein folding. The GroEL-GroES system forms a nano-cage that allows encapsulation of the non-native substrate proteins and provides a physical environment optimized to promote and accelerate protein folding. The protein is Chaperonin GroEL of Pseudomonas aeruginosa (strain UCBPP-PA14).